The chain runs to 689 residues: Ataxin-1-like (689 aa).

Over residues 1 to 19 (MKPVHERSQECLPPKKRDL) the composition is skewed to basic and acidic residues. 3 disordered regions span residues 1-46 (MKPV…SEWS), 185-223 (ATPP…LDLA), and 242-297 (LHET…GEGQ). An interaction with NCOR2 and ATXN1 region spans residues 20–197 (PVTSEDMGRT…PPQAPSPAHS (178 aa)). The tract at residues 20–197 (PVTSEDMGRT…PPQAPSPAHS (178 aa)) is self-association. 2 stretches are compositionally biased toward polar residues: residues 28 to 43 (RTTS…SDAS) and 200 to 219 (KAPS…STQP). Residues 257–268 (QESQSALEAAAA) show a composition bias toward low complexity. The span at 273 to 285 (RPRERNLVRRESE) shows a compositional bias: basic and acidic residues. Position 284 is a phosphoserine (Ser284). Thr330 is modified (phosphothreonine). Residues 357–405 (KEEPSPLNLSHHTPDHQGEGRGSARNPAELAEKSQARGFYPQSHQEPVK) are disordered. Residue Ser361 is modified to Phosphoserine. The AXH domain occupies 457-588 (PPPITSSHLP…SISLQSLNSN (132 aa)). Ser615 is modified (phosphoserine). The disordered stretch occupies residues 617–647 (ELCDSEGKSQPAGEGSRVVEPSQPESGAQAC).

The protein belongs to the ATXN1 family. In terms of assembly, homodimer. Interacts with CIC. Interacts (via AXH domain) with NCOR2. Interacts with ATXN1. Directly interacts with RBPJ; this interaction is disrupted in the presence of Notch intracellular domain. Competes with ATXN1 for RBPJ-binding. Found in a complex with CIC and ATXN1. In terms of tissue distribution, expressed in cerebellum and cerebral cortex.

It is found in the nucleus. The protein localises to the cell projection. Its subcellular location is the dendrite. Its function is as follows. Chromatin-binding factor that repress Notch signaling in the absence of Notch intracellular domain by acting as a CBF1 corepressor. Binds to the HEY promoter and might assist, along with NCOR2, RBPJ-mediated repression. Can suppress ATXN1 cytotoxicity in spinocerebellar ataxia type 1 (SCA1). In concert with CIC and ATXN1, involved in brain development. This is Ataxin-1-like (ATXN1L) from Homo sapiens (Human).